We begin with the raw amino-acid sequence, 231 residues long: MDGKKREVENGKNGNNIKDGNSSNTTNYGKDTKTTQTIKDVKDVKSVKKAFKELQEWLREKMKKEGLVRFMKDGYPLEFVEEDVVYFLGSRKRPNLKDFIKGITLVRTYAKLRERRKQFHKRSKKPIVKKYSAPKYTRVVAYMYRVLEEKGYTPDDRKRLIVYFFNFIKPDYMSNAGIYVCLEKFRTAKFLRNKKIEELRKELIKEIPPHLFLQIEAFLSLFPTFKRKKAT.

Positions 1-10 (MDGKKREVEN) are enriched in basic and acidic residues. The disordered stretch occupies residues 1–35 (MDGKKREVENGKNGNNIKDGNSSNTTNYGKDTKTT). Residues 11-24 (GKNGNNIKDGNSSN) show a composition bias toward low complexity. The segment covering 25–35 (TTNYGKDTKTT) has biased composition (polar residues).

This is an uncharacterized protein from Aquifex aeolicus (strain VF5).